Here is a 34-residue protein sequence, read N- to C-terminus: Photosystem II reaction center protein T (34 aa).

Residues 3–23 (SVAYILIFTLTIGTLFFAVAF) form a helical membrane-spanning segment.

The protein belongs to the PsbT family. In terms of assembly, PSII is composed of 1 copy each of membrane proteins PsbA, PsbB, PsbC, PsbD, PsbE, PsbF, PsbH, PsbI, PsbJ, PsbK, PsbL, PsbM, PsbT, PsbX, PsbY, PsbZ, Psb30/Ycf12, peripheral proteins PsbO, CyanoQ (PsbQ), PsbU, PsbV and a large number of cofactors. It forms dimeric complexes.

Its subcellular location is the cellular thylakoid membrane. In terms of biological role, found at the monomer-monomer interface of the photosystem II (PS II) dimer, plays a role in assembly and dimerization of PSII. PSII is a light-driven water plastoquinone oxidoreductase, using light energy to abstract electrons from H(2)O, generating a proton gradient subsequently used for ATP formation. The protein is Photosystem II reaction center protein T of Mastigocladus laminosus (Fischerella sp.).